Here is a 534-residue protein sequence, read N- to C-terminus: Multicopper oxidase LPR1 homolog 3 (534 aa).

Cu cation-binding residues include H84 and H86. A glycan (N-linked (GlcNAc...) asparagine) is linked at N109. Residues H133 and H135 each coordinate Cu cation. Residues 219–291 form the Plastocyanin-like domain; the sequence is PFQAVQRRRY…VDFSLVVNPN (73 aa). N-linked (GlcNAc...) asparagine glycans are attached at residues N234, N291, N312, N323, N341, and N372. Cu cation is bound by residues H419, H422, and H424. Residue N450 is glycosylated (N-linked (GlcNAc...) asparagine). 5 residues coordinate Cu cation: H515, C516, H517, H521, and M526.

The protein belongs to the multicopper oxidase family. The cofactor is Cu cation. In terms of tissue distribution, expressed in roots and basal stems.

It is found in the endoplasmic reticulum membrane. Its function is as follows. Multicopper oxidase that may play a role in the maintenance of inorganic phosphate homeostasis. The polypeptide is Multicopper oxidase LPR1 homolog 3 (Oryza sativa subsp. japonica (Rice)).